The primary structure comprises 117 residues: MSKHHPDLVLCRRQPGITVGKLCERCDEKCPICDSHVRPTTLVRICDECAFGSSQDRCIICGAPGVSDCYYCSECTRMEYDRDGCPRVINLGSSRTDWFYERKKFKNAGKEMPGATY.

It belongs to the PHF5 family.

The protein resides in the nucleus. Functionally, required for pre-mRNA splicing. In Schizosaccharomyces pombe (strain 972 / ATCC 24843) (Fission yeast), this protein is Pre-mRNA-splicing factor ini1 (ini1).